Here is a 161-residue protein sequence, read N- to C-terminus: uncharacterized protein (161 aa).

The or 21 signal peptide spans 1–23 (MKKFAFLTALFAACYLPNAYAHA). Residues 129-149 (IYLHDILGGIGYIVGIAGLIA) form a helical membrane-spanning segment.

Its subcellular location is the membrane. This is an uncharacterized protein from Haemophilus influenzae (strain ATCC 51907 / DSM 11121 / KW20 / Rd).